The primary structure comprises 365 residues: tRNA/tmRNA (uracil-C(5))-methyltransferase (365 aa).

S-adenosyl-L-methionine contacts are provided by glutamine 189, tyrosine 217, asparagine 222, glutamate 238, and aspartate 298. Residue cysteine 323 is the Nucleophile of the active site. The active-site Proton acceptor is glutamate 357.

It belongs to the class I-like SAM-binding methyltransferase superfamily. RNA M5U methyltransferase family. TrmA subfamily.

It catalyses the reaction uridine(54) in tRNA + S-adenosyl-L-methionine = 5-methyluridine(54) in tRNA + S-adenosyl-L-homocysteine + H(+). The catalysed reaction is uridine(341) in tmRNA + S-adenosyl-L-methionine = 5-methyluridine(341) in tmRNA + S-adenosyl-L-homocysteine + H(+). Functionally, dual-specificity methyltransferase that catalyzes the formation of 5-methyluridine at position 54 (m5U54) in all tRNAs, and that of position 341 (m5U341) in tmRNA (transfer-mRNA). The protein is tRNA/tmRNA (uracil-C(5))-methyltransferase of Shewanella baltica (strain OS185).